The following is a 436-amino-acid chain: UPF0597 protein YhaM (436 aa).

This sequence belongs to the UPF0597 family.

In terms of biological role, thought to be a D-serine dehydratase, however it does not complement a dsdA (D-serine dehydratase) mutant in strain CFT073, suggesting it may not have that function. In Escherichia coli O157:H7, this protein is UPF0597 protein YhaM.